A 57-amino-acid chain; its full sequence is MPAIQPPLYLTFLLLMLLYRIITLYVWSLSTITYKTSVRHASLYQRSFFRWSVDHSL.

Topologically, residues methionine 1–leucine 8 are virion surface. The chain crosses the membrane as a helical span at residues tyrosine 9–leucine 29. Residues serine 30–leucine 57 lie on the Intravirion side of the membrane.

The protein belongs to the rubulavirus small hydrophobic protein family. As to quaternary structure, interacts with host TNFRSF1A, RIPK1 and IRAK1; these interactions interfere with host NF-kappa-B activation at the level of receptor complexes. Interacts with host protein UBQLN4.

Its subcellular location is the virion membrane. The protein localises to the host cell membrane. Plays a role in the inhibition of the host NF-kappa-B pathway. This inhibition occurs at the receptor level, by preventing the signaling of TNFR1 as well as IL-1R and TLR3. The chain is Small hydrophobic protein (SH) from Mumps virus (strain Edingburgh 4) (MuV).